A 100-amino-acid chain; its full sequence is Sec-independent protein translocase protein TatA (100 aa).

The chain crosses the membrane as a helical span at residues 1-21 (MGALKPWHIAVLVVVLILLFG). Residues 44 to 55 (KSLHDDDRDLAE) are compositionally biased toward basic and acidic residues. Residues 44–100 (KSLHDDDRDLAEKANAQAGYQPLPPQVQQEPYPQQTPYQAPPQQQPVVDPVQRARDS) form a disordered region. The segment covering 69-81 (QVQQEPYPQQTPY) has biased composition (low complexity).

It belongs to the TatA/E family. As to quaternary structure, the Tat system comprises two distinct complexes: a TatABC complex, containing multiple copies of TatA, TatB and TatC subunits, and a separate TatA complex, containing only TatA subunits. Substrates initially bind to the TatABC complex, which probably triggers association of the separate TatA complex to form the active translocon.

It localises to the cell membrane. Functionally, part of the twin-arginine translocation (Tat) system that transports large folded proteins containing a characteristic twin-arginine motif in their signal peptide across membranes. TatA could form the protein-conducting channel of the Tat system. The protein is Sec-independent protein translocase protein TatA of Salinispora arenicola (strain CNS-205).